The chain runs to 64 residues: Epidermal growth factor (64 aa).

Residues 1 to 21 (MMRHLLLVGAAILIFVSDAQA) form the signal peptide. A Pyrrolidone carboxylic acid modification is found at Gln22. The region spanning 25–61 (GEDPCQIVRCSYGANCIAYGDTAICECPFGYSGIRCQ) is the EGF-like domain. Intrachain disulfides connect Cys29–Cys40, Cys34–Cys49, and Cys51–Cys60.

Albumen gland. Up-regulated in adult CNS after axotomy.

The protein resides in the secreted. Functionally, induces neurite outgrowth in specific adult neurons in vitro. The protein is Epidermal growth factor of Lymnaea stagnalis (Great pond snail).